Consider the following 481-residue polypeptide: Acyl-CoA ligase cnsG (481 aa).

The short motif at 3–11 (SPQLPPSMK) is the PTS2-type peroxisomal targeting signal element. ATP is bound by residues 124–132 (KSGTTGNPK), 263–268 (NGYGMT), Asp353, and Arg368. A substrate-binding site is contributed by Thr268. CoA-binding positions include 376–378 (GGL) and 446–448 (AIF). Lys466 is a binding site for ATP.

This sequence belongs to the ATP-dependent AMP-binding enzyme family.

Its pathway is alkaloid biosynthesis. Functionally, acyl-CoA ligase; part of the gene cluster that mediates the biosynthesis of communesins, a prominent class of indole alkaloids with great potential as pharmaceuticals. Communesins are biosynthesized by the coupling of tryptamine and aurantioclavine, two building blocks derived from L-tryptophan. The L-tryptophan decarboxylase cnsB converts L-tryptophan to tryptamine, whereas the tryptophan dimethylallyltransferase cnsF converts L-tryptophan to 4-dimethylallyl tryptophan which is further transformed to aurantioclavine by the aurantioclavine synthase cnsA, probably aided by the catalase cnsD. The cytochrome P450 monooxygenase cnsC catalyzes the heterodimeric coupling between the two different indole moieties, tryptamine and aurantioclavine, to construct vicinal quaternary stereocenters and yield the heptacyclic communesin scaffold. The O-methyltransferase cnsE then methylates the communesin scaffold to produce communesin K, the simplest characterized communesin that contains the heptacyclic core. The dioxygenase cnsJ converts communesin K into communesin I. Acylation to introduce the hexadienyl group at position N16 of communesin I by the acyltransferase cnsK leads to the production of communesin B. The hexadienyl group is produced by the highly reducing polyketide synthase cnsI, before being hydrolytically removed from cnsI by the serine hydrolase cnsH, converted into hexadienyl-CoA by the CoA ligase cnsG, and then transferred to communesin I by cnsK. Surprisingly, cnsK may also be a promiscuous acyltransferase that can tolerate a range of acyl groups, including acetyl-, propionyl-, and butyryl-CoA, which lead to communesins A, G and H respectively. The roles of the alpha-ketoglutarate-dependent dioxygenases cnsM and cnsP have still to be determined. This chain is Acyl-CoA ligase cnsG, found in Penicillium expansum (Blue mold rot fungus).